We begin with the raw amino-acid sequence, 155 residues long: Ribosomal RNA large subunit methyltransferase H (155 aa).

Residues leucine 72, glycine 103, and 122–127 (LSPLTL) each bind S-adenosyl-L-methionine.

It belongs to the RNA methyltransferase RlmH family. As to quaternary structure, homodimer.

The protein resides in the cytoplasm. The enzyme catalyses pseudouridine(1915) in 23S rRNA + S-adenosyl-L-methionine = N(3)-methylpseudouridine(1915) in 23S rRNA + S-adenosyl-L-homocysteine + H(+). Functionally, specifically methylates the pseudouridine at position 1915 (m3Psi1915) in 23S rRNA. The sequence is that of Ribosomal RNA large subunit methyltransferase H from Actinobacillus pleuropneumoniae serotype 3 (strain JL03).